A 167-amino-acid polypeptide reads, in one-letter code: Phosphopantetheine adenylyltransferase (167 aa).

Threonine 9 is a substrate binding site. Residues 9-10 (TF) and histidine 17 each bind ATP. Residues lysine 41, leucine 73, and arginine 87 each contribute to the substrate site. ATP-binding positions include 88–90 (GLR), glutamate 98, and 123–129 (NSYISST).

It belongs to the bacterial CoaD family. Homohexamer. Mg(2+) serves as cofactor.

It localises to the cytoplasm. The catalysed reaction is (R)-4'-phosphopantetheine + ATP + H(+) = 3'-dephospho-CoA + diphosphate. The protein operates within cofactor biosynthesis; coenzyme A biosynthesis; CoA from (R)-pantothenate: step 4/5. Functionally, reversibly transfers an adenylyl group from ATP to 4'-phosphopantetheine, yielding dephospho-CoA (dPCoA) and pyrophosphate. In Chromohalobacter salexigens (strain ATCC BAA-138 / DSM 3043 / CIP 106854 / NCIMB 13768 / 1H11), this protein is Phosphopantetheine adenylyltransferase.